The sequence spans 110 residues: Waprin-Thr1 (110 aa).

The signal sequence occupies residues 1 to 20 (MYKKGTILVLAYLLIATAVC). Residues 22–68 (LSYKEGHCPLRNSVSKCIPRCVSDYQCSFNEKCCPNKCGSESCVQAS) form the WAP domain. Disulfide bonds link cysteine 29–cysteine 55, cysteine 38–cysteine 59, cysteine 42–cysteine 54, and cysteine 48–cysteine 64.

Belongs to the venom waprin family. Cys-rich waprin subfamily. As to expression, expressed by the venom gland.

It localises to the secreted. Functionally, antimicrobial peptides with activity against Gram-positive and Gram-negative bacteria as well as fungi. Recognizes carbohydrates in the microbial cell walls, and induces structural damage to them. Also inhibits microbial serine proteases subtilisin A and proteinase K, as well as human and porcine elastases. Carbohydrates that are recognized are LPS, mannan, peptidoglycan, and N-acetl-D-glucosamine. This chain is Waprin-Thr1, found in Apis mellifera (Honeybee).